A 341-amino-acid chain; its full sequence is MARVYREGDIGNEIAQKRIAVLGFGSQGHAHALNLRDSGCEVTVGLYRGSASWPKAEEAGLRVAEIPETVRWAEVVMMLLPDERQPPVFREQVAPNLAEGNLMLFAHGFNVHFNQVSVPPEVDLGLVAPKGPGHVLRSLYEEGKGMPALFAVGRDATGQARDLVLSYAKGIGCARAGVLETTFAEETETDLFGEQAVLCGGLSALLKAGFETLVEAGYQPELAYYECVNELKLIVDLIYEGGLARMRYSVSNTAEYGDYTAGPKVIDEGVRERMREILADIQSGRFAKEWVLENQAGGSSFLAMRRREAEHMVEKVGAELRALAAEGAQSPAGSPAGGESR.

The 181-residue stretch at 1–181 (MARVYREGDI…GCARAGVLET (181 aa)) folds into the KARI N-terminal Rossmann domain. Residues 24–27 (FGSQ), S50, S52, and 82–85 (DERQ) contribute to the NADP(+) site. Residue H107 is part of the active site. Residue G133 participates in NADP(+) binding. One can recognise a KARI C-terminal knotted domain in the interval 182–327 (TFAEETETDL…AELRALAAEG (146 aa)). Residues D190, E194, E226, and E230 each contribute to the Mg(2+) site. S251 serves as a coordination point for substrate.

The protein belongs to the ketol-acid reductoisomerase family. The cofactor is Mg(2+).

It carries out the reaction (2R)-2,3-dihydroxy-3-methylbutanoate + NADP(+) = (2S)-2-acetolactate + NADPH + H(+). The enzyme catalyses (2R,3R)-2,3-dihydroxy-3-methylpentanoate + NADP(+) = (S)-2-ethyl-2-hydroxy-3-oxobutanoate + NADPH + H(+). It participates in amino-acid biosynthesis; L-isoleucine biosynthesis; L-isoleucine from 2-oxobutanoate: step 2/4. It functions in the pathway amino-acid biosynthesis; L-valine biosynthesis; L-valine from pyruvate: step 2/4. Its function is as follows. Involved in the biosynthesis of branched-chain amino acids (BCAA). Catalyzes an alkyl-migration followed by a ketol-acid reduction of (S)-2-acetolactate (S2AL) to yield (R)-2,3-dihydroxy-isovalerate. In the isomerase reaction, S2AL is rearranged via a Mg-dependent methyl migration to produce 3-hydroxy-3-methyl-2-ketobutyrate (HMKB). In the reductase reaction, this 2-ketoacid undergoes a metal-dependent reduction by NADPH to yield (R)-2,3-dihydroxy-isovalerate. This chain is Ketol-acid reductoisomerase (NADP(+)), found in Rubrobacter xylanophilus (strain DSM 9941 / JCM 11954 / NBRC 16129 / PRD-1).